The following is a 346-amino-acid chain: N(4)-(beta-N-acetylglucosaminyl)-L-asparaginase (346 aa).

A signal peptide spans 1–23; it reads MERKSNLSLLLLLLVLGMPLVRG. The N-linked (GlcNAc...) asparagine glycan is linked to N38. 2 disulfides stabilise this stretch: C64-C69 and C163-C179. T206 (nucleophile) is an active-site residue. Residues 234 to 237 and 257 to 260 each bind substrate; these read RVGD and TGDG. C286 and C306 are oxidised to a cystine. A glycan (N-linked (GlcNAc...) asparagine) is linked at N310. C317 and C345 are joined by a disulfide.

The protein belongs to the Ntn-hydrolase family. Heterotetramer of two alpha and two beta chains arranged as a dimer of alpha/beta heterodimers. Post-translationally, cleaved into an alpha and beta chain by autocatalysis; this activates the enzyme. The N-terminal residue of the beta subunit is responsible for the nucleophile hydrolase activity. N-glycosylated.

Its subcellular location is the lysosome. It carries out the reaction N(4)-(beta-N-acetyl-D-glucosaminyl)-L-asparagine + H2O = N-acetyl-beta-D-glucosaminylamine + L-aspartate + H(+). Cleaves the GlcNAc-Asn bond which joins oligosaccharides to the peptide of asparagine-linked glycoproteins. The protein is N(4)-(beta-N-acetylglucosaminyl)-L-asparaginase (Aga) of Mus musculus (Mouse).